The sequence spans 113 residues: Protein translation factor SUI1 homolog (113 aa).

Positions Met-1–Gly-24 are disordered. Residue Ser-2 is modified to N-acetylserine.

It belongs to the SUI1 family.

In terms of biological role, probably involved in translation. The polypeptide is Protein translation factor SUI1 homolog (Brassica oleracea (Wild cabbage)).